We begin with the raw amino-acid sequence, 344 residues long: Methionine import ATP-binding protein MetN (344 aa).

One can recognise an ABC transporter domain in the interval 2–241; the sequence is IKLEKISKIF…PQTQLAKEFI (240 aa). Residue 38–45 participates in ATP binding; the sequence is GASGAGKS.

It belongs to the ABC transporter superfamily. Methionine importer (TC 3.A.1.24) family. As to quaternary structure, the complex is composed of two ATP-binding proteins (MetN), two transmembrane proteins (MetI) and a solute-binding protein (MetQ).

It is found in the cell inner membrane. It catalyses the reaction L-methionine(out) + ATP + H2O = L-methionine(in) + ADP + phosphate + H(+). It carries out the reaction D-methionine(out) + ATP + H2O = D-methionine(in) + ADP + phosphate + H(+). Part of the ABC transporter complex MetNIQ involved in methionine import. Responsible for energy coupling to the transport system. This chain is Methionine import ATP-binding protein MetN, found in Pasteurella multocida (strain Pm70).